The primary structure comprises 475 residues: Glutamate--tRNA ligase (475 aa).

Positions 9 to 19 match the 'HIGH' region motif; it reads PSPTGYLHVGG. Residues 240–244 carry the 'KMSKS' region motif; the sequence is KLSKR. Lys-243 contributes to the ATP binding site.

It belongs to the class-I aminoacyl-tRNA synthetase family. Glutamate--tRNA ligase type 1 subfamily. In terms of assembly, monomer.

Its subcellular location is the cytoplasm. It carries out the reaction tRNA(Glu) + L-glutamate + ATP = L-glutamyl-tRNA(Glu) + AMP + diphosphate. Its function is as follows. Catalyzes the attachment of glutamate to tRNA(Glu) in a two-step reaction: glutamate is first activated by ATP to form Glu-AMP and then transferred to the acceptor end of tRNA(Glu). This chain is Glutamate--tRNA ligase, found in Vibrio campbellii (strain ATCC BAA-1116).